The primary structure comprises 370 residues: tRNA 2-selenouridine synthase (370 aa).

Residues 12-136 form the Rhodanese domain; that stretch reads FLEDVPMMDT…MRNFLLDTTR (125 aa). Cys95 functions as the S-selanylcysteine intermediate in the catalytic mechanism.

This sequence belongs to the SelU family. In terms of assembly, monomer.

It catalyses the reaction 5-methylaminomethyl-2-thiouridine(34) in tRNA + selenophosphate + (2E)-geranyl diphosphate + H2O + H(+) = 5-methylaminomethyl-2-selenouridine(34) in tRNA + (2E)-thiogeraniol + phosphate + diphosphate. The enzyme catalyses 5-methylaminomethyl-2-thiouridine(34) in tRNA + (2E)-geranyl diphosphate = 5-methylaminomethyl-S-(2E)-geranyl-thiouridine(34) in tRNA + diphosphate. The catalysed reaction is 5-methylaminomethyl-S-(2E)-geranyl-thiouridine(34) in tRNA + selenophosphate + H(+) = 5-methylaminomethyl-2-(Se-phospho)selenouridine(34) in tRNA + (2E)-thiogeraniol. It carries out the reaction 5-methylaminomethyl-2-(Se-phospho)selenouridine(34) in tRNA + H2O = 5-methylaminomethyl-2-selenouridine(34) in tRNA + phosphate. Its function is as follows. Involved in the post-transcriptional modification of the uridine at the wobble position (U34) of tRNA(Lys), tRNA(Glu) and tRNA(Gln). Catalyzes the conversion of 2-thiouridine (S2U-RNA) to 2-selenouridine (Se2U-RNA). Acts in a two-step process involving geranylation of 2-thiouridine (S2U) to S-geranyl-2-thiouridine (geS2U) and subsequent selenation of the latter derivative to 2-selenouridine (Se2U) in the tRNA chain. The chain is tRNA 2-selenouridine synthase from Azotobacter vinelandii (strain DJ / ATCC BAA-1303).